Here is a 427-residue protein sequence, read N- to C-terminus: Putative FBD-associated F-box protein At3g50710 (427 aa).

Positions 1-53 constitute an F-box domain; sequence MDRISNLSDDLLLKIVSSLPTKDVVVTMLLSKRWKFLWMMVPKLRFDDEFELE. The 51-residue stretch at 345 to 395 folds into the FBD domain; it reads HWEEPSSVPQCLLFHLNIFEWKYYNAGDEEKKVVAYILKNARQLKTATFSA.

The chain is Putative FBD-associated F-box protein At3g50710 from Arabidopsis thaliana (Mouse-ear cress).